We begin with the raw amino-acid sequence, 827 residues long: MNDETLREQTTAESEETSPTTPSPEPEVVETLPLIPLEGAVVFPYIVVSLTLDELGSASAEAAAREGRQVLLAARRPDAPADAPITDQLFNVGVVARIEQLGTLPNGASGVVVRGLVRAVLGEAVQTTPYLRFRFTRRPDVFERTPELEQLMVEVHAAIDAVLELRPGVTQEIRNFVRSIDDPGHLADNTGYSPDYTFAERQELLETFDVSERLRKVLMFYRKQFALLEVQAKLRQEVQESAARQQREFYLRQQLRAIQKELGEDTSEAAELDDLRQKLAAADLPEVARKEADRELSRLARINASSPEYQMVRTYLEWLAELPWNKYTGQPIDIAFARQVLDEDHHGLQKVKERILEYLAVKQRRAALGEENLRANREPILAFVGPPGVGKTSLGQSIARALGRSFVRMSLGGVRDEAELRGFRRTYIGSQPGRIIQELRRAGTADPVILLDEIDKLGIDYRGDPAAALLEVLDPEQNHTFTDHYLNLPFDLSRVLFLATANTWDTVPPALRDRMEVIELSGYIEDEKVQIAQIHLVPRQLRANGLRPEEAVVTEDAIRCIINEYTREAGVRNLERSIGAVLRKVARRLSEGEIDPANTPFVVDAAFVRAALGRPRFTNETRERIDQPGVAIGLVWTPVGGDIIFVEASAVEGKKELTITGQLGEVMRESAEAALTYVRSRARSLGIEPDFFETHAIHIHVPAGAVPKDGPSAGITMATALASAATGRLVRDDIAMTGEISLRGRVLPIGGIKEKALGAHRAGIRTVILPRRNLIDLDDLPPAVSAEMTFIPVDTLDEVLSIALLPPATTTDTLTVAQRSDVLTPAS.

Positions Met-1–Glu-27 are disordered. The Lon N-terminal domain maps to Leu-32 to Phe-225. Gly-385 to Thr-392 is a binding site for ATP. Positions Ile-625–Pro-806 constitute a Lon proteolytic domain. Catalysis depends on residues Ser-712 and Lys-755.

The protein belongs to the peptidase S16 family. In terms of assembly, homohexamer. Organized in a ring with a central cavity.

It localises to the cytoplasm. It carries out the reaction Hydrolysis of proteins in presence of ATP.. ATP-dependent serine protease that mediates the selective degradation of mutant and abnormal proteins as well as certain short-lived regulatory proteins. Required for cellular homeostasis and for survival from DNA damage and developmental changes induced by stress. Degrades polypeptides processively to yield small peptide fragments that are 5 to 10 amino acids long. Binds to DNA in a double-stranded, site-specific manner. The sequence is that of Lon protease from Chloroflexus aurantiacus (strain ATCC 29366 / DSM 635 / J-10-fl).